The following is a 138-amino-acid chain: Large ribosomal subunit protein uL16 (138 aa).

The protein belongs to the universal ribosomal protein uL16 family. Part of the 50S ribosomal subunit.

In terms of biological role, binds 23S rRNA and is also seen to make contacts with the A and possibly P site tRNAs. The polypeptide is Large ribosomal subunit protein uL16 (Chlamydia caviae (strain ATCC VR-813 / DSM 19441 / 03DC25 / GPIC) (Chlamydophila caviae)).